Here is a 388-residue protein sequence, read N- to C-terminus: Biotin synthase (388 aa).

The region spanning W47–R277 is the Radical SAM core domain. C65, C69, and C72 together coordinate [4Fe-4S] cluster. [2Fe-2S] cluster contacts are provided by C109, C142, C202, and R272. The tract at residues A335–D371 is disordered.

Belongs to the radical SAM superfamily. Biotin synthase family. In terms of assembly, homodimer. The cofactor is [4Fe-4S] cluster. [2Fe-2S] cluster serves as cofactor.

The catalysed reaction is (4R,5S)-dethiobiotin + (sulfur carrier)-SH + 2 reduced [2Fe-2S]-[ferredoxin] + 2 S-adenosyl-L-methionine = (sulfur carrier)-H + biotin + 2 5'-deoxyadenosine + 2 L-methionine + 2 oxidized [2Fe-2S]-[ferredoxin]. It functions in the pathway cofactor biosynthesis; biotin biosynthesis; biotin from 7,8-diaminononanoate: step 2/2. Functionally, catalyzes the conversion of dethiobiotin (DTB) to biotin by the insertion of a sulfur atom into dethiobiotin via a radical-based mechanism. This Streptomyces avermitilis (strain ATCC 31267 / DSM 46492 / JCM 5070 / NBRC 14893 / NCIMB 12804 / NRRL 8165 / MA-4680) protein is Biotin synthase.